We begin with the raw amino-acid sequence, 203 residues long: Orotate phosphoribosyltransferase (203 aa).

5-phospho-alpha-D-ribose 1-diphosphate is bound by residues arginine 94, lysine 98, histidine 100, and glutamate 120 to serine 128. Orotate is bound at residue serine 124.

The protein belongs to the purine/pyrimidine phosphoribosyltransferase family. PyrE subfamily. In terms of assembly, homodimer. It depends on Mg(2+) as a cofactor.

The catalysed reaction is orotidine 5'-phosphate + diphosphate = orotate + 5-phospho-alpha-D-ribose 1-diphosphate. It participates in pyrimidine metabolism; UMP biosynthesis via de novo pathway; UMP from orotate: step 1/2. In terms of biological role, catalyzes the transfer of a ribosyl phosphate group from 5-phosphoribose 1-diphosphate to orotate, leading to the formation of orotidine monophosphate (OMP). This Staphylococcus epidermidis (strain ATCC 35984 / DSM 28319 / BCRC 17069 / CCUG 31568 / BM 3577 / RP62A) protein is Orotate phosphoribosyltransferase.